A 576-amino-acid polypeptide reads, in one-letter code: Proline--tRNA ligase (576 aa).

This sequence belongs to the class-II aminoacyl-tRNA synthetase family. ProS type 1 subfamily. In terms of assembly, homodimer.

The protein localises to the cytoplasm. It catalyses the reaction tRNA(Pro) + L-proline + ATP = L-prolyl-tRNA(Pro) + AMP + diphosphate. Catalyzes the attachment of proline to tRNA(Pro) in a two-step reaction: proline is first activated by ATP to form Pro-AMP and then transferred to the acceptor end of tRNA(Pro). As ProRS can inadvertently accommodate and process non-cognate amino acids such as alanine and cysteine, to avoid such errors it has two additional distinct editing activities against alanine. One activity is designated as 'pretransfer' editing and involves the tRNA(Pro)-independent hydrolysis of activated Ala-AMP. The other activity is designated 'posttransfer' editing and involves deacylation of mischarged Ala-tRNA(Pro). The misacylated Cys-tRNA(Pro) is not edited by ProRS. This Leptospira borgpetersenii serovar Hardjo-bovis (strain L550) protein is Proline--tRNA ligase.